We begin with the raw amino-acid sequence, 224 residues long: Large ribosomal subunit protein uL16z (224 aa).

This sequence belongs to the universal ribosomal protein uL16 family. Component of the small ribosomal subunit. Mature ribosomes consist of a small (40S) and a large (60S) subunit. The 40S subunit contains about 33 different proteins and 1 molecule of RNA (18S). The 60S subunit contains about 49 different proteins and 3 molecules of RNA (25S, 5.8S and 5S).

The sequence is that of Large ribosomal subunit protein uL16z (SC34) from Oryza sativa subsp. indica (Rice).